A 371-amino-acid polypeptide reads, in one-letter code: DNA replication and repair protein RecF (371 aa).

Residue 30–37 participates in ATP binding; sequence GANAQGKT.

This sequence belongs to the RecF family.

The protein localises to the cytoplasm. Its function is as follows. The RecF protein is involved in DNA metabolism; it is required for DNA replication and normal SOS inducibility. RecF binds preferentially to single-stranded, linear DNA. It also seems to bind ATP. The protein is DNA replication and repair protein RecF of Lacticaseibacillus paracasei (strain ATCC 334 / BCRC 17002 / CCUG 31169 / CIP 107868 / KCTC 3260 / NRRL B-441) (Lactobacillus paracasei).